We begin with the raw amino-acid sequence, 622 residues long: Probable potassium transport system protein Kup 1 (622 aa).

Helical transmembrane passes span 11–31, 50–70, 101–121, 137–157, 168–188, 215–235, 247–267, 285–305, 337–357, 366–386, 393–413, and 419–439; these read LTLG…LYAV, ILSI…VTLV, VLLL…VITP, PAFN…LFWV, FFGP…VAQI, FIIL…YADL, WFAV…ALLL, ALLP…QALI, IYLP…VMIF, AYGI…FFVI, PLWL…AFWA, and LFDG…LMIT.

This sequence belongs to the HAK/KUP transporter (TC 2.A.72) family.

It localises to the cell inner membrane. It catalyses the reaction K(+)(in) + H(+)(in) = K(+)(out) + H(+)(out). Transport of potassium into the cell. Likely operates as a K(+):H(+) symporter. The polypeptide is Probable potassium transport system protein Kup 1 (Albidiferax ferrireducens (strain ATCC BAA-621 / DSM 15236 / T118) (Rhodoferax ferrireducens)).